A 655-amino-acid chain; its full sequence is ATP-dependent zinc metalloprotease FtsH (655 aa).

The Cytoplasmic segment spans residues 1–17 (MPIETEPNRTRKNFEPK). The chain crosses the membrane as a helical span at residues 18–38 (RFGGSLFILFTLLLFLNLFVL). The Lumenal segment spans residues 39 to 124 (RGPRFPITAY…APPPSSLSWL (86 aa)). Residues 125–145 (PTLLGWVVPPLIFFGIWSWLI) traverse the membrane as a helical segment. The Cytoplasmic segment spans residues 146-655 (NRNQGAGPAA…LNSHQLIGIN (510 aa)). Position 216-223 (216-223 (GPPGTGKT)) interacts with ATP. H440 provides a ligand contact to Zn(2+). E441 is an active-site residue. Zn(2+) contacts are provided by H444 and D517.

In the central section; belongs to the AAA ATPase family. The protein in the C-terminal section; belongs to the peptidase M41 family. As to quaternary structure, homohexamer. The cofactor is Zn(2+).

The protein resides in the cellular thylakoid membrane. Functionally, acts as a processive, ATP-dependent zinc metallopeptidase for both cytoplasmic and membrane proteins. Plays a role in the quality control of integral membrane proteins. The polypeptide is ATP-dependent zinc metalloprotease FtsH (Acaryochloris marina (strain MBIC 11017)).